The following is a 48-amino-acid chain: Light-harvesting polypeptide B-885 beta-2 chain (48 aa).

Topologically, residues 1–20 (AEDRKSLSGLTEQEAQEFGT) are cytoplasmic. A helical transmembrane segment spans residues 21–43 (LYTQGVAFVAVIAIVAHALVWAW). Histidine 37 contacts a bacteriochlorophyll. The Periplasmic portion of the chain corresponds to 44 to 48 (RPWLQ).

This sequence belongs to the antenna complex beta subunit family. The core complex is formed by different alpha and beta chains, binding bacteriochlorophyll molecules, and arranged most probably in tetrameric structures disposed around the reaction center. The non-pigmented gamma chains may constitute additional components.

The protein resides in the cell inner membrane. Antenna complexes are light-harvesting systems, which transfer the excitation energy to the reaction centers. This Rhodocyclus tenuis (Rhodospirillum tenue) protein is Light-harvesting polypeptide B-885 beta-2 chain.